Reading from the N-terminus, the 66-residue chain is Large ribosomal subunit protein bL35 (66 aa).

Basic residues-rich tracts occupy residues 1–15 and 27–40; these read MPKL…KRFK and AGKR…TKKQ. The interval 1-40 is disordered; the sequence is MPKLKTKSGAKKRFKVTGTGKVMSAHAGKRHGMIKRTKKQ.

The protein belongs to the bacterial ribosomal protein bL35 family.

The polypeptide is Large ribosomal subunit protein bL35 (Rhodopseudomonas palustris (strain BisA53)).